The following is a 449-amino-acid chain: Glucose-6-phosphate isomerase (449 aa).

E291 functions as the Proton donor in the catalytic mechanism. Residues H312 and K426 contribute to the active site.

Belongs to the GPI family.

It localises to the cytoplasm. The enzyme catalyses alpha-D-glucose 6-phosphate = beta-D-fructose 6-phosphate. It participates in carbohydrate biosynthesis; gluconeogenesis. Its pathway is carbohydrate degradation; glycolysis; D-glyceraldehyde 3-phosphate and glycerone phosphate from D-glucose: step 2/4. Catalyzes the reversible isomerization of glucose-6-phosphate to fructose-6-phosphate. The chain is Glucose-6-phosphate isomerase from Clostridium botulinum (strain Alaska E43 / Type E3).